The chain runs to 389 residues: Zinc finger C2HC domain-containing protein 1C homolog (389 aa).

2 disordered regions span residues 16–44 and 84–115; these read MLPH…SQQS and SYPH…GPQS. Composition is skewed to polar residues over residues 35-44 and 90-102; these read YEQGDSSQQS and GISQ…DSQG. Residues 211 to 266 are a coiled coil; the sequence is VQIRRLEAAGESLEEEIRRKQILLRGKLKKTEEELRRIQMQKEQAKENENRELQKI. Disordered stretches follow at residues 301 to 320 and 343 to 389; these read REDE…QLSD and SELS…PQLG. The span at 307 to 317 shows a compositional bias: polar residues; sequence GRSQQNSSPFQ. The span at 368 to 382 shows a compositional bias: low complexity; that stretch reads SSLSMAPDSSGSSGS.

It belongs to the ZC2HC1 family.

The chain is Zinc finger C2HC domain-containing protein 1C homolog (ZC2HC1C) from Pongo abelii (Sumatran orangutan).